Reading from the N-terminus, the 35-residue chain is Potassium channel toxin (35 aa).

Disulfide bonds link C6-C25, C11-C30, and C15-C32.

This sequence belongs to the short scorpion toxin superfamily. Potassium channel inhibitor family. Alpha-KTx 21 subfamily. Expressed by the venom gland.

The protein localises to the secreted. Its function is as follows. Toxin that blocks voltage-gated potassium channels (Kv). The protein is Potassium channel toxin of Tityus metuendus (Scorpion).